Here is a 570-residue protein sequence, read N- to C-terminus: Probable diguanylate cyclase DgcQ (570 aa).

Transmembrane regions (helical) follow at residues 20–40 (FGPGHVVNTCFLIVMLFSTLL) and 360–380 (IALTLLWVLFTAMLLISWGVI). The 136-residue stretch at 428–563 (QPFSVIQLDL…GRNRICASDA (136 aa)) folds into the GGDEF domain. Residue D436 coordinates Mg(2+). Residues N444, H449, and D453 each coordinate substrate. E479 is a Mg(2+) binding site. E479 serves as the catalytic Proton acceptor.

In terms of assembly, homodimer. Mg(2+) serves as cofactor.

It is found in the cell inner membrane. It carries out the reaction 2 GTP = 3',3'-c-di-GMP + 2 diphosphate. It participates in glycan metabolism; bacterial cellulose biosynthesis. The protein operates within purine metabolism; 3',5'-cyclic di-GMP biosynthesis. In terms of biological role, catalyzes the synthesis of cyclic-di-GMP (c-di-GMP) via the condensation of 2 GTP molecules. Cyclic-di-GMP is a second messenger which controls cell surface-associated traits in bacteria. Involved in the regulation of cellulose production. The sequence is that of Probable diguanylate cyclase DgcQ from Salmonella choleraesuis (strain SC-B67).